Consider the following 177-residue polypeptide: Phosphatidylglycerol/phosphatidylinositol transfer protein (177 aa).

Positions 1-17 are cleaved as a signal peptide; the sequence is MRLSAAVIALLSTSAAA. Positions 18–30 are excised as a propeptide; sequence FSVYRENSVSAND.

This sequence belongs to the NPC2 family. Monomer.

Functionally, catalyzes the intermembrane transfer of phosphatidylglycerol and phosphatidylinositol. The chain is Phosphatidylglycerol/phosphatidylinositol transfer protein (npc-2) from Neurospora crassa (strain ATCC 24698 / 74-OR23-1A / CBS 708.71 / DSM 1257 / FGSC 987).